Consider the following 234-residue polypeptide: Orotidine 5'-phosphate decarboxylase (234 aa).

Substrate is bound by residues D10, K32, 59–68 (DLKFHDIPNT), T119, R180, Q189, G209, and R210. K61 acts as the Proton donor in catalysis.

This sequence belongs to the OMP decarboxylase family. Type 1 subfamily. In terms of assembly, homodimer.

The catalysed reaction is orotidine 5'-phosphate + H(+) = UMP + CO2. Its pathway is pyrimidine metabolism; UMP biosynthesis via de novo pathway; UMP from orotate: step 2/2. Catalyzes the decarboxylation of orotidine 5'-monophosphate (OMP) to uridine 5'-monophosphate (UMP). In Mannheimia succiniciproducens (strain KCTC 0769BP / MBEL55E), this protein is Orotidine 5'-phosphate decarboxylase.